The primary structure comprises 95 residues: Large ribosomal subunit protein uL23 (95 aa).

This sequence belongs to the universal ribosomal protein uL23 family. In terms of assembly, part of the 50S ribosomal subunit. Contacts protein L29, and trigger factor when it is bound to the ribosome.

Its function is as follows. One of the early assembly proteins it binds 23S rRNA. One of the proteins that surrounds the polypeptide exit tunnel on the outside of the ribosome. Forms the main docking site for trigger factor binding to the ribosome. The protein is Large ribosomal subunit protein uL23 of Leuconostoc mesenteroides subsp. mesenteroides (strain ATCC 8293 / DSM 20343 / BCRC 11652 / CCM 1803 / JCM 6124 / NCDO 523 / NBRC 100496 / NCIMB 8023 / NCTC 12954 / NRRL B-1118 / 37Y).